A 173-amino-acid polypeptide reads, in one-letter code: dCTP deaminase, dUMP-forming (173 aa).

Residues 93-98, Asp111, 119-121, Gln138, and Tyr151 each bind dCTP; these read RSSIGR and TLE. Residue Glu121 is the Proton donor/acceptor of the active site.

The protein belongs to the dCTP deaminase family. As to quaternary structure, homotrimer.

The enzyme catalyses dCTP + 2 H2O = dUMP + NH4(+) + diphosphate. Its pathway is pyrimidine metabolism; dUMP biosynthesis; dUMP from dCTP: step 1/1. In terms of biological role, bifunctional enzyme that catalyzes both the deamination of dCTP to dUTP and the hydrolysis of dUTP to dUMP without releasing the toxic dUTP intermediate. The polypeptide is dCTP deaminase, dUMP-forming (Cytophaga hutchinsonii (strain ATCC 33406 / DSM 1761 / CIP 103989 / NBRC 15051 / NCIMB 9469 / D465)).